Reading from the N-terminus, the 931-residue chain is MLGTHFPPPPLGPSEGRAAPCTFQIPDGSYRCLALEAEESSSEDGLQGEVRLVDLEEEGTSKSRVNHGTPPLSRAPAIIQPSSCCREARGGFQHSDKPSREWDVVQARKVMTASVSSSPVPRVAQKPALGRSTSFTEKDLKEAKERSQRIAAQLTTPPSSNSRGVQLFNRRRQRVNEFTLESRGQRSPKLSQEALQTGHPSSPIGHAPGLSVNPTSPSKPGSPKHSSSQSPSRGVPGHIMEGYSEEASLLRHLEKVASEEEEVPLVVYLKENAALLTANGLHLSQNRETQQSSPNPPETEEVPSPAADINQNPSSPNATLTTAASNSHHNQPTADVNQNPPATITPVQQNSSETQCSPNGTLDSKPNTPSADDGQRPVPAEEVRSSILLIDKVSAPPSAASPFSREATPLSSSGPPAADLMSSSLLIGMQPSTLVASAEQEVSGHAAVTTPTKVYSEVHLTLAKPASVVNRTARPFGMQSPGTTSQIEQSPMMGRRHFGEKAWAPPASSMADRSPQPQRHIMARSPMVERRLVGQRSPVVERRPLGNFTPPPTYAETLSTAPVASQVRSPPSYSTLYPSSDPKPPHLKGQVVPANKTGILEESMARRGSRKSMFTFVEKPKVTPNPDLLDLVQTADEKRRQRDQGEVGMEDEPFALGAEASNFQQEPIARDRSGPAAAEETVPEWASCLKSPRIQAKPKPKPNQNLSEASGKGAELYARRQSRMEKYVIESSGHAELARCPSPTMSLPSSWKYTTNAPGGFRVASLSPARTPPASLYHGYLPENGVLRPEPTKQQPHQMRPSLYALSPVKEPAKISSRATSSRASSRTVSPRAASPAKPSSLDLVPNLPRAGLPPSPALPRPSRSSPGLYNAPVQDSLQPTAVSPTYSSDISPVSPSRAWSPRAKQAPRPSFSTRNAGIEAQVWKPSFCFK.

2 disordered regions span residues 56–78 and 113–243; these read EEEG…APAI and ASVS…MEGY. Phosphoserine is present on S134. The segment covering 136-148 has biased composition (basic and acidic residues); the sequence is TEKDLKEAKERSQ. Polar residues-rich tracts occupy residues 153–164 and 188–200; these read QLTTPPSSNSRG and PKLS…TGHP. Phosphoserine is present on residues S202, S222, and S258. The span at 214-232 shows a compositional bias: low complexity; sequence PTSPSKPGSPKHSSSQSPS. Residues 280-420 form a disordered region; sequence GLHLSQNRET…SSSGPPAADL (141 aa). Polar residues-rich tracts occupy residues 282–293 and 309–370; these read HLSQNRETQQSS and INQN…NTPS. A compositionally biased stretch (basic and acidic residues) spans 373 to 384; sequence DGQRPVPAEEVR. S490 and S514 each carry phosphoserine. Disordered regions lie at residues 542–591 and 691–711; these read RRPL…KGQV and SPRI…EASG. T549 bears the Phosphothreonine mark. The PPxY motif motif lies at 551–554; the sequence is PPTY. Residues 556–568 are compositionally biased toward polar residues; that stretch reads ETLSTAPVASQVR. S569 is subject to Phosphoserine. Positions 569 to 580 are enriched in low complexity; it reads SPPSYSTLYPSS. The short motif at 570–573 is the PPxY motif element; the sequence is PPSY. Phosphoserine occurs at positions 691, 742, 746, and 767. A Phosphothreonine modification is found at T771. Positions 775–918 are disordered; that stretch reads SLYHGYLPEN…RPSFSTRNAG (144 aa). Residues 816-841 are compositionally biased toward low complexity; sequence SSRATSSRASSRTVSPRAASPAKPSS. S835 is modified (phosphoserine). The residue at position 850 (R850) is an Omega-N-methylarginine. S856 is modified (phosphoserine). Over residues 874–895 the composition is skewed to polar residues; it reads VQDSLQPTAVSPTYSSDISPVS.

The protein belongs to the synaptopodin family. As to quaternary structure, interacts with BAIAP1. Interacts with actin. Interacts (via PPxY motifs) with WWC1 (via WW domains). In terms of processing, O-glycosylated. In terms of tissue distribution, expressed at high levels in brain and at moderate, but still significant levels in the heart, skeletal muscle, lung and kidney. In brain, expressed in the cerebral cortex, hippocampus, olfactory bulb and striatum.

The protein resides in the cytoplasm. The protein localises to the cytoskeleton. Its subcellular location is the cell junction. It is found in the tight junction. It localises to the perikaryon. The protein resides in the cell projection. The protein localises to the dendritic spine. Its subcellular location is the postsynaptic density. It is found in the synapse. It localises to the cytosol. Its function is as follows. Actin-associated protein that may play a role in modulating actin-based shape and motility of dendritic spines and renal podocyte foot processes. Seems to be essential for the formation of spine apparatuses in spines of telencephalic neurons, which is involved in synaptic plasticity. The protein is Synaptopodin (Synpo) of Rattus norvegicus (Rat).